The sequence spans 121 residues: Large ribosomal subunit protein bL20 (121 aa).

It belongs to the bacterial ribosomal protein bL20 family.

Binds directly to 23S ribosomal RNA and is necessary for the in vitro assembly process of the 50S ribosomal subunit. It is not involved in the protein synthesizing functions of that subunit. The polypeptide is Large ribosomal subunit protein bL20 (Petrotoga mobilis (strain DSM 10674 / SJ95)).